The primary structure comprises 153 residues: uncharacterized protein (153 aa).

The protein to M.jannaschii MJ1183.

This is an uncharacterized protein from Methanothermobacter thermautotrophicus (strain ATCC 29096 / DSM 1053 / JCM 10044 / NBRC 100330 / Delta H) (Methanobacterium thermoautotrophicum).